The primary structure comprises 259 residues: 5'-nucleotidase SurE (259 aa).

4 residues coordinate a divalent metal cation: Asp-8, Asp-9, Ser-40, and Asn-92.

Belongs to the SurE nucleotidase family. The cofactor is a divalent metal cation.

It is found in the cytoplasm. It catalyses the reaction a ribonucleoside 5'-phosphate + H2O = a ribonucleoside + phosphate. Its function is as follows. Nucleotidase that shows phosphatase activity on nucleoside 5'-monophosphates. The sequence is that of 5'-nucleotidase SurE from Stenotrophomonas maltophilia (strain K279a).